A 252-amino-acid polypeptide reads, in one-letter code: Isoprenyl transferase 2 (252 aa).

The active site involves D26. Position 26 (D26) interacts with Mg(2+). Substrate is bound by residues 27–30 (GNGR), W31, R39, H43, and 71–73 (SSE). N74 functions as the Proton acceptor in the catalytic mechanism. Substrate is bound by residues W75, R77, R194, and 200–202 (RLS). E213 contributes to the Mg(2+) binding site.

This sequence belongs to the UPP synthase family. In terms of assembly, homodimer. Mg(2+) serves as cofactor.

Its function is as follows. Catalyzes the condensation of isopentenyl diphosphate (IPP) with allylic pyrophosphates generating different type of terpenoids. The sequence is that of Isoprenyl transferase 2 from Bradyrhizobium diazoefficiens (strain JCM 10833 / BCRC 13528 / IAM 13628 / NBRC 14792 / USDA 110).